The following is a 427-amino-acid chain: Trigger factor (427 aa).

One can recognise a PPIase FKBP-type domain in the interval 163–248 (GDTVILDFEG…LHEIKTKEVP (86 aa)).

It belongs to the FKBP-type PPIase family. Tig subfamily.

The protein localises to the cytoplasm. The enzyme catalyses [protein]-peptidylproline (omega=180) = [protein]-peptidylproline (omega=0). Its function is as follows. Involved in protein export. Acts as a chaperone by maintaining the newly synthesized protein in an open conformation. Functions as a peptidyl-prolyl cis-trans isomerase. This is Trigger factor from Listeria monocytogenes serotype 4b (strain CLIP80459).